Reading from the N-terminus, the 168-residue chain is Protein OPG162 (168 aa).

A helical transmembrane segment spans residues 15-37 (LSVPAAIMMLLSTIISGIGTFLH). Intrachain disulfides connect Cys-75–Cys-162 and Cys-141–Cys-154. N-linked (GlcNAc...) asparagine; by host glycosylation is present at Asn-133.

This sequence belongs to the orthopoxvirus OPG162 protein family. As to quaternary structure, interacts with protein OPG161. Interacts with protein OPG164. Interacts with protein OPG190.

The protein localises to the virion membrane. Its subcellular location is the host Golgi apparatus. Its function is as follows. Forms a complex with OPG162 and OPG190 to coordinate the incorporation of OPG164 into wrapped enveloped virion (EV) membranes and, subsequently, the production of actin tails. Therefore plays an essential role in efficient cell-to-cell spread of viral particles. In Monkeypox virus, this protein is Protein OPG162 (OPG162).